A 101-amino-acid polypeptide reads, in one-letter code: MAGQKIRIRLKAYDHEAIDASAKKIVETVTRTGARVVGPVPLPTEKNVYCVIRSPHKDKDSREHFEMRTHKRLIDILDPTPKTVDALMRIDLPASVDVNIQ.

Belongs to the universal ribosomal protein uS10 family. As to quaternary structure, part of the 30S ribosomal subunit.

Involved in the binding of tRNA to the ribosomes. The sequence is that of Small ribosomal subunit protein uS10 from Corynebacterium urealyticum (strain ATCC 43042 / DSM 7109).